Reading from the N-terminus, the 496-residue chain is METYILSLDQGTTSSRAILFNKKGEIVHSAQKEFTQYFPKPGWVEHNAQEIWGSILAVIATCLSEADVKPEQIAGIGITNQRETAVVWEKATGKPVYNAIVWQSRQTAEICEELKEKGYGDMVREKTGLLIDAYFSGTKVKWILDNVEGAREKAERGELLFGTIDTWLVWKLSGGKAHVTDYSNASRTLMFNIHDLKWDDELLEILTVPKSMLPEVRPSSEVYGHTVDYHFFSQNVPIAGVAGDQQAALFGQACFSEGMAKNTYGTGCFMLMNTGETAVNSNHGLLTTIAWGLNGKVNYALEGSIFVAGSAIQWLRDGMRMVNDASESEEYASRVESTDGVYVVPAFVGLGTPYWDSEVRGAVFGVTRGTTKEHFIRATLESLGYQTRDVLCAMEADSGIELKTLRVDGGAVKNNFLMQFQSDMLQVPVERPMISETTALGAAYLAGLAVGYWESQEEIKAQWDMDRSFTPEMEKERSEELYSGWKKAIEATKAFK.

Thr-12 provides a ligand contact to ADP. Positions 12, 13, and 14 each coordinate ATP. Thr-12 is a sn-glycerol 3-phosphate binding site. Arg-16 contributes to the ADP binding site. 3 residues coordinate sn-glycerol 3-phosphate: Arg-82, Glu-83, and Tyr-134. Positions 82, 83, and 134 each coordinate glycerol. Phosphohistidine; by HPr is present on His-230. Asp-244 contributes to the sn-glycerol 3-phosphate binding site. Asp-244 and Gln-245 together coordinate glycerol. ADP is bound by residues Thr-266 and Gly-309. The ATP site is built by Thr-266, Gly-309, Gln-313, and Gly-410. Gly-410 and Asn-414 together coordinate ADP.

This sequence belongs to the FGGY kinase family. Homotetramer and homodimer (in equilibrium). Post-translationally, the phosphoenolpyruvate-dependent sugar phosphotransferase system (PTS), including enzyme I, and histidine-containing protein (HPr) are required for the phosphorylation, which leads to the activation of the enzyme.

The catalysed reaction is glycerol + ATP = sn-glycerol 3-phosphate + ADP + H(+). Its pathway is polyol metabolism; glycerol degradation via glycerol kinase pathway; sn-glycerol 3-phosphate from glycerol: step 1/1. With respect to regulation, activated by phosphorylation and inhibited by fructose 1,6-bisphosphate (FBP). Its function is as follows. Key enzyme in the regulation of glycerol uptake and metabolism. Catalyzes the phosphorylation of glycerol to yield sn-glycerol 3-phosphate. The chain is Glycerol kinase from Bacillus cytotoxicus (strain DSM 22905 / CIP 110041 / 391-98 / NVH 391-98).